Reading from the N-terminus, the 273-residue chain is Ribosomal RNA small subunit methyltransferase A (273 aa).

6 residues coordinate S-adenosyl-L-methionine: Asn18, Leu20, Gly45, Glu66, Asp91, and Asn113.

This sequence belongs to the class I-like SAM-binding methyltransferase superfamily. rRNA adenine N(6)-methyltransferase family. RsmA subfamily.

Its subcellular location is the cytoplasm. The catalysed reaction is adenosine(1518)/adenosine(1519) in 16S rRNA + 4 S-adenosyl-L-methionine = N(6)-dimethyladenosine(1518)/N(6)-dimethyladenosine(1519) in 16S rRNA + 4 S-adenosyl-L-homocysteine + 4 H(+). Specifically dimethylates two adjacent adenosines (A1518 and A1519) in the loop of a conserved hairpin near the 3'-end of 16S rRNA in the 30S particle. May play a critical role in biogenesis of 30S subunits. The chain is Ribosomal RNA small subunit methyltransferase A from Salmonella choleraesuis (strain SC-B67).